A 319-amino-acid polypeptide reads, in one-letter code: Carbonic anhydrase 6 (319 aa).

The first 14 residues, methionine 1 to alanine 14, serve as a signal peptide directing secretion. An Alpha-carbonic anhydrase domain is found at histidine 16–phenylalanine 273. A disulfide bridge connects residues cysteine 37 and cysteine 219. Residue asparagine 62 is glycosylated (N-linked (GlcNAc...) asparagine). The Proton donor/acceptor role is filled by histidine 80. Residues histidine 106, histidine 108, and histidine 133 each contribute to the Zn(2+) site. Residue threonine 215 to threonine 216 coordinates substrate. An N-linked (GlcNAc...) asparagine glycan is attached at asparagine 251.

Belongs to the alpha-carbonic anhydrase family. Zn(2+) serves as cofactor. As to expression, major constituent of saliva.

The protein resides in the secreted. It carries out the reaction hydrogencarbonate + H(+) = CO2 + H2O. In terms of biological role, reversible hydration of carbon dioxide. Its role in saliva is unknown. In Bos taurus (Bovine), this protein is Carbonic anhydrase 6 (CA6).